The sequence spans 322 residues: Myeloid-associated differentiation marker (322 aa).

Over residues 1–18 (MPVTVTRTTITTTTTSSS) the composition is skewed to low complexity. The disordered stretch occupies residues 1-21 (MPVTVTRTTITTTTTSSSGLG). Ser22 is modified (phosphoserine). 2 MARVEL domains span residues 31 to 163 (ALTQ…ARPG) and 168 to 319 (YMAT…HLVF). 8 helical membrane-spanning segments follow: residues 41-61 (LLQLVSTCVAFSLVASVGAWT), 70-90 (FTWCFCFSVTLIILIVELCGL), 101-121 (FPITFACYAALFCLSASIIYP), 137-157 (AIAATFFSCIACVAYATEVAW), 171-191 (TVPGLLKVLETFVACIIFAFI), 203-223 (LEWCVAVYAICFILAAIAILL), 239-259 (FLSGLALLSVLLYATALVLWP), and 294-314 (LAVAILTAINLLAYVADLVHS).

Belongs to the MAL family. In terms of tissue distribution, widely expressed. Not detected in thymus.

Its subcellular location is the membrane. This Homo sapiens (Human) protein is Myeloid-associated differentiation marker (MYADM).